The primary structure comprises 450 residues: Phosphoglucosamine mutase (450 aa).

Ser102 acts as the Phosphoserine intermediate in catalysis. Residues Ser102, Asp243, Asp245, and Asp247 each contribute to the Mg(2+) site. Ser102 is modified (phosphoserine).

This sequence belongs to the phosphohexose mutase family. Mg(2+) serves as cofactor. Post-translationally, activated by phosphorylation.

It catalyses the reaction alpha-D-glucosamine 1-phosphate = D-glucosamine 6-phosphate. Functionally, catalyzes the conversion of glucosamine-6-phosphate to glucosamine-1-phosphate. This is Phosphoglucosamine mutase from Rhizobium rhizogenes (strain K84 / ATCC BAA-868) (Agrobacterium radiobacter).